Reading from the N-terminus, the 616-residue chain is TAF6-like RNA polymerase II p300/CBP-associated factor-associated factor 65 kDa subunit 6L (616 aa).

2 disordered regions span residues 399–432 (SLLL…EDPS) and 455–539 (FGTG…GTRD). Phosphoserine is present on residues S494 and S500. An asymmetric dimethylarginine mark is found at R549, R555, and R587.

Belongs to the TAF6 family. The PCAF complex is composed of a number of TBP-associated factors (TAFS), such as TAF5, TAF5L, TAF6, TAF6L, TAF9, TAF10 and TAF12, PCAF, and also PCAF-associated factors (PAFs), such as TADA2L/ADA2, TADA3L/ADA3 and SPT3. Component of the STAGA transcription coactivator-HAT complex, at least composed of SUPT3H, GCN5L2, TAF5L, TAF6L, SUPT7L, TADA3L, TAD1L, TAF10, TAF12, TRRAP and TAF9.

The protein localises to the nucleus. Its function is as follows. Functions as a component of the PCAF complex. The PCAF complex is capable of efficiently acetylating histones in a nucleosomal context. The PCAF complex could be considered as the human version of the yeast SAGA complex. With TAF5L, acts as an epigenetic regulator essential for somatic reprogramming. Regulates target genes through H3K9ac deposition and MYC recruitment which trigger MYC regulatory network to orchestrate gene expression programs to control embryonic stem cell state. Functions with MYC to activate target gene expression through RNA polymerase II pause release. The sequence is that of TAF6-like RNA polymerase II p300/CBP-associated factor-associated factor 65 kDa subunit 6L from Mus musculus (Mouse).